Consider the following 1561-residue polypeptide: Adhesion G protein-coupled receptor B2 (1561 aa).

Positions 1–20 (MTPACPLLLSVILSLRLATA) are cleaved as a signal peptide. At 21-930 (FDPAPSACSA…ELAGAPSVPL (910 aa)) the chain is on the extracellular side. Residues N94, N182, and N183 are each glycosylated (N-linked (GlcNAc...) asparagine). A glycan (O-linked (Xyl...) (chondroitin sulfate) serine) is linked at S257. TSP type-1 domains lie at 300-353 (DPAA…ATCP), 355-408 (HGVW…AACP), 410-463 (EGQW…LDCP), and 466-519 (DGKW…KRCP). 14 cysteine pairs are disulfide-bonded: C312–C346, C316–C352, C327–C336, C367–C402, C371–C407, C382–C392, C422–C457, C426–C462, C437–C447, C478–C513, C482–C518, C493–C503, C525–C560, and C548–C578. An N-linked (GlcNAc...) asparagine glycan is attached at N347. Residue N428 is glycosylated (N-linked (GlcNAc...) asparagine). N-linked (GlcNAc...) asparagine glycans are attached at residues N551 and N636. Positions 748-918 (DRLFLPKEVL…AVLAQPPKDL (171 aa)) constitute a GAIN-B domain. The interval 757 to 797 (LSLSSPGKPATPGAATAGSPGRGRGPGTVPPGPGHAHQRLL) is disordered. The segment covering 760 to 775 (SSPGKPATPGAATAGS) has biased composition (low complexity). N861 is a glycosylation site (N-linked (GlcNAc...) asparagine). 2 cysteine pairs are disulfide-bonded: C868–C900 and C888–C902. Residues 868–918 (CASWDYSRADTNSGDWNTESCQTLETQAAHTRCQCQHLSTFAVLAQPPKDL) form a GPS region. A helical transmembrane segment spans residues 931–951 (VIGCAVSCMALLTLLAIYAAF). The Cytoplasmic segment spans residues 952 to 959 (WRFIKSER). Residues 960–980 (SIILLNFCLSILASNILILVG) form a helical membrane-spanning segment. At 981 to 988 (QSRVLSKG) the chain is on the extracellular side. Residues 989 to 1009 (VCTMTAAFLHFFFLSSFCWVL) traverse the membrane as a helical segment. At 1010–1030 (TEAWQSYLAVIGRMRTRLVRK) the chain is on the cytoplasmic side. The helical transmembrane segment at 1031 to 1051 (RFLCLGWGLPALVVAVSVGFT) threads the bilayer. Residues 1052 to 1072 (RTKGYGTSSYCWLSLEGGLLY) lie on the Extracellular side of the membrane. A helical transmembrane segment spans residues 1073 to 1093 (AFVGPAAVIVLVNMLIGIIVF). Topologically, residues 1094 to 1115 (NKLMARDGVSDKSKKQRAGSER) are cytoplasmic. The helical transmembrane segment at 1116 to 1136 (CPWASLLLPCSACGAVPSPLL) threads the bilayer. At 1137–1147 (SSASARNAMAS) the chain is on the extracellular side. A helical transmembrane segment spans residues 1148–1168 (LWSSCVVLPLLALTWMSAVLA). The Cytoplasmic segment spans residues 1169–1561 (MTDRRSVLFQ…PPDGDFQTEV (393 aa)). Y1345 is modified (phosphotyrosine). 3 disordered regions span residues 1355–1377 (LQPG…GTPR), 1417–1447 (FQPP…PGST), and 1491–1561 (RYRS…QTEV). Over residues 1366 to 1376 (EAPRARPEGTP) the composition is skewed to basic and acidic residues. Residues 1491–1502 (RYRSQSSAKEKP) are compositionally biased toward basic and acidic residues. Over residues 1519 to 1528 (SWSTFKSMTL) the composition is skewed to polar residues. Over residues 1551-1561 (EPPDGDFQTEV) the composition is skewed to acidic residues.

This sequence belongs to the G-protein coupled receptor 2 family. Adhesion G-protein coupled receptor (ADGR) subfamily. Heterodimer of 2 chains generated by proteolytic processing; the large extracellular N-terminal fragment and the membrane-bound C-terminal fragment predominantly remain associated and non-covalently linked. Interacts with GABPB2. Interacts (via carboxy-terminus) with TAX1BP3. Interacts with GNAZ. Interacts with SH3GL2. Post-translationally, glycosylated. Autoproteolytically processed at the GPS region of the GAIN-B domain; this cleavage modulates receptor activity. Additionally, furin is involved in the cleavage at another site, in the middle of the extracellular domain, generating a soluble fragment. In terms of tissue distribution, specifically expressed in the brain. The peak level in the brain is observed 10 days after birth.

The protein resides in the cell membrane. Its subcellular location is the secreted. Its activity is regulated as follows. Receptor activity is regulated by proteolytic processing. The long N-terminal has a an inhibitory effect on the constitutive signaling activity. Removal of the N-terminal region induces an increase of the receptor activity. Functionally, orphan G-protein coupled receptor involved in cell adhesion and probably in cell-cell interactions. Activates NFAT-signaling pathway, a transcription factor, via the G-protein GNAZ. Involved in angiogenesis inhibition. This is Adhesion G protein-coupled receptor B2 (Adgrb2) from Mus musculus (Mouse).